Consider the following 200-residue polypeptide: Protein GrpE (200 aa).

It belongs to the GrpE family. As to quaternary structure, homodimer.

It is found in the cytoplasm. Its function is as follows. Participates actively in the response to hyperosmotic and heat shock by preventing the aggregation of stress-denatured proteins, in association with DnaK and GrpE. It is the nucleotide exchange factor for DnaK and may function as a thermosensor. Unfolded proteins bind initially to DnaJ; upon interaction with the DnaJ-bound protein, DnaK hydrolyzes its bound ATP, resulting in the formation of a stable complex. GrpE releases ADP from DnaK; ATP binding to DnaK triggers the release of the substrate protein, thus completing the reaction cycle. Several rounds of ATP-dependent interactions between DnaJ, DnaK and GrpE are required for fully efficient folding. The sequence is that of Protein GrpE from Shewanella piezotolerans (strain WP3 / JCM 13877).